The chain runs to 360 residues: DNA replication and repair protein RecF (360 aa).

33-40 (GENGSGKT) is an ATP binding site.

It belongs to the RecF family.

The protein resides in the cytoplasm. Functionally, the RecF protein is involved in DNA metabolism; it is required for DNA replication and normal SOS inducibility. RecF binds preferentially to single-stranded, linear DNA. It also seems to bind ATP. This Rickettsia rickettsii (strain Iowa) protein is DNA replication and repair protein RecF.